A 60-amino-acid chain; its full sequence is Ixodegrin-like peptide (60 aa).

The signal sequence occupies residues 1–21; the sequence is MNAAFIAALLILGALTLDAMA. Positions 49–51 match the Cell attachment site motif; the sequence is RGD.

This sequence belongs to the ixodegrin family. Contains 3 disulfide bonds. As to expression, expressed in salivary glands.

The protein resides in the secreted. In terms of biological role, tick salivary platelet aggregation inhibitor that plays an important part in the anti-hemostatic strategy of ticks. Inhibits platelet aggregation induced by ADP, thrombin and thromboxane A2 (TXA2). Blocks platelet adhesion to soluble collagen (most probably through the binding to alpha-2/beta-1 integrin (ITGA2/ITGB1)) and binds to purified glycoprotein IIb/IIIa (ITGA2B/ITGB3) in a dose-dependent manner. In vivo, reduces thrombus weight effectively in a rat arteriovenous shunt model and inhibits thrombosis in a carrageenan-induced mouse tail thrombosis model. This is Ixodegrin-like peptide from Ixodes scapularis (Black-legged tick).